The chain runs to 335 residues: Fructose-1,6-bisphosphatase class 1 (335 aa).

Residues Glu-90, Asp-113, Leu-115, and Asp-116 each coordinate Mg(2+). Substrate contacts are provided by residues 116 to 119 (DGSS), Asn-209, Tyr-242, and Lys-272. Glu-278 provides a ligand contact to Mg(2+).

Belongs to the FBPase class 1 family. As to quaternary structure, homotetramer. Mg(2+) is required as a cofactor.

It localises to the cytoplasm. The catalysed reaction is beta-D-fructose 1,6-bisphosphate + H2O = beta-D-fructose 6-phosphate + phosphate. The protein operates within carbohydrate biosynthesis; gluconeogenesis. In Histophilus somni (strain 2336) (Haemophilus somnus), this protein is Fructose-1,6-bisphosphatase class 1.